The chain runs to 256 residues: Hemin import ATP-binding protein HmuV (256 aa).

One can recognise an ABC transporter domain in the interval 2–239 (IHAFAVSVIR…ANVREVYQVD (238 aa)). Residue 34–41 (GPNGAGKS) coordinates ATP.

This sequence belongs to the ABC transporter superfamily. Heme (hemin) importer (TC 3.A.1.14.5) family. As to quaternary structure, the complex is composed of two ATP-binding proteins (HmuV), two transmembrane proteins (HmuU) and a solute-binding protein (HmuT).

The protein resides in the cell inner membrane. Functionally, part of the ABC transporter complex HmuTUV involved in hemin import. Responsible for energy coupling to the transport system. The protein is Hemin import ATP-binding protein HmuV of Hahella chejuensis (strain KCTC 2396).